The chain runs to 217 residues: Rhicadhesin receptor (217 aa).

Residues 1 to 20 (MKLIAVLLLVVLATATTATA) form the signal peptide. A disulfide bridge links cysteine 30 with cysteine 45. Residues asparagine 50 and asparagine 68 are each glycosylated (N-linked (GlcNAc...) asparagine). In terms of domain architecture, Cupin type-1 spans 58–207 (SNLLVKQGAT…AFQIGTKEVQ (150 aa)). 4 residues coordinate Mn(2+): histidine 107, histidine 109, glutamate 114, and histidine 153.

This sequence belongs to the germin family. Post-translationally, glycosylated.

The protein resides in the secreted. Its subcellular location is the extracellular space. It is found in the apoplast. It localises to the cell wall. Its function is as follows. Putative receptor for bacterial rhicadhesin, an attachment protein of rhizobiaceae. The polypeptide is Rhicadhesin receptor (GER1) (Pisum sativum (Garden pea)).